Consider the following 164-residue polypeptide: Dihydrofolate reductase (164 aa).

Residues 2–162 enclose the DHFR domain; it reads NISIIVAMSQ…FYVTFKILKK (161 aa). 6-8 is a binding site for substrate; it reads IVA. NADP(+) is bound by residues 7 to 8 and 15 to 20; these read VA and IGQKNS. Residue D28 coordinates substrate. NADP(+) is bound at residue 44–47; it reads GRKT. R58 contacts substrate. NADP(+) contacts are provided by residues 63–66 and 96–101; these read LTRQ and IGGSNL. Position 115 (T115) interacts with substrate.

The protein belongs to the dihydrofolate reductase family.

The enzyme catalyses (6S)-5,6,7,8-tetrahydrofolate + NADP(+) = 7,8-dihydrofolate + NADPH + H(+). Its pathway is cofactor biosynthesis; tetrahydrofolate biosynthesis; 5,6,7,8-tetrahydrofolate from 7,8-dihydrofolate: step 1/1. Key enzyme in folate metabolism. Catalyzes an essential reaction for de novo glycine and purine synthesis, and for DNA precursor synthesis. This Buchnera aphidicola subsp. Baizongia pistaciae (strain Bp) protein is Dihydrofolate reductase (folA).